We begin with the raw amino-acid sequence, 432 residues long: Cytoplasmic 60S subunit biogenesis factor REH1 (432 aa).

Residues 6–30 form a C2H2-type 1 zinc finger; sequence FTCNCCVIQFKTSDLQRYHMKTEWH. The segment at 79-150 is disordered; it reads QSNALPQKQK…NTDYGEDTVS (72 aa). Residues 86–98 show a composition bias toward basic residues; the sequence is KQKKPIKSKRGRK. Over residues 105-117 the composition is skewed to basic and acidic residues; sequence KRKDRDIAKEKQN. Polar residues predominate over residues 118–143; it reads RSVSPSGSISSQLSNLTVGTENTNTD. 2 consecutive C2H2-type zinc fingers follow at residues 186 to 209 and 237 to 261; these read TECI…FSEH and HNCL…SKRH.

Belongs to the REI1 family. Associates with nascent pre-60S particles that have not yet entered the translating pool, and is released from mature 60S subunits. Interacts with pre-60S factors NMD3, LSG1, and TIF6.

It localises to the cytoplasm. Functionally, pre-60S-associated cytoplasmic factor involved in the cytoplasmic maturation of the 60S subunit. May act redundantly with REI1 to directly promote a stabilizing structural rearrangement in cytoplasmic 60S subunit maturation independent on the REI1-specific ARX1 recycling. The sequence is that of Cytoplasmic 60S subunit biogenesis factor REH1 (REH1) from Saccharomyces cerevisiae (strain ATCC 204508 / S288c) (Baker's yeast).